The primary structure comprises 180 residues: Adenine phosphoribosyltransferase (180 aa).

This sequence belongs to the purine/pyrimidine phosphoribosyltransferase family. As to quaternary structure, homodimer.

It is found in the cytoplasm. The catalysed reaction is AMP + diphosphate = 5-phospho-alpha-D-ribose 1-diphosphate + adenine. Its pathway is purine metabolism; AMP biosynthesis via salvage pathway; AMP from adenine: step 1/1. Catalyzes a salvage reaction resulting in the formation of AMP, that is energically less costly than de novo synthesis. The chain is Adenine phosphoribosyltransferase from Pasteurella multocida (strain Pm70).